The chain runs to 427 residues: Peptidase B (427 aa).

Residues lysine 195 and aspartate 200 each coordinate Mn(2+). Residue lysine 207 is part of the active site. Mn(2+) contacts are provided by aspartate 218, aspartate 277, and glutamate 279. Arginine 281 is a catalytic residue.

This sequence belongs to the peptidase M17 family. Homohexamer. It depends on Mn(2+) as a cofactor.

The protein resides in the cytoplasm. The catalysed reaction is Release of an N-terminal amino acid, Xaa, from a peptide or arylamide. Xaa is preferably Glu or Asp but may be other amino acids, including Leu, Met, His, Cys and Gln.. In terms of biological role, probably plays an important role in intracellular peptide degradation. The sequence is that of Peptidase B from Escherichia coli O127:H6 (strain E2348/69 / EPEC).